The chain runs to 347 residues: Homocysteine S-methyltransferase 3 (347 aa).

A Hcy-binding domain is found at 12-333 (LMTDFLEKCG…NTIRAIAKVL (322 aa)). Positions 251, 318, and 319 each coordinate Zn(2+).

Monomer. Requires Zn(2+) as cofactor. In terms of tissue distribution, expressed predominantly in rosette leaves. Expressed in roots, cauline leaves and developing seeds.

The enzyme catalyses S-methyl-L-methionine + L-homocysteine = 2 L-methionine + H(+). Its function is as follows. Catalyzes methyl transfer from S-methylmethionine (SMM) to adenosyl-L-homocysteine (AdoMet). SMM degradation (by HMT-1, HMT-2 and HMT-3) and biosynthesis (by MMT1) constitute the SMM cycle in plants, which is probably required to achieve short term control of AdoMet level. This Arabidopsis thaliana (Mouse-ear cress) protein is Homocysteine S-methyltransferase 3 (HMT3).